We begin with the raw amino-acid sequence, 348 residues long: Oxygen-dependent coproporphyrinogen-III oxidase (348 aa).

Position 104 (Ser104) interacts with substrate. A divalent metal cation contacts are provided by His108 and His118. Catalysis depends on His118, which acts as the Proton donor. Residue 120–122 (NYR) participates in substrate binding. His152 and His182 together coordinate a divalent metal cation. Positions 272-307 (YAEFNLVWDRGTIFGLQTNGRTESILMSLPPLARWE) are important for dimerization.

The protein belongs to the aerobic coproporphyrinogen-III oxidase family. Homodimer. It depends on a divalent metal cation as a cofactor.

It is found in the cytoplasm. It catalyses the reaction coproporphyrinogen III + O2 + 2 H(+) = protoporphyrinogen IX + 2 CO2 + 2 H2O. It participates in porphyrin-containing compound metabolism; protoporphyrin-IX biosynthesis; protoporphyrinogen-IX from coproporphyrinogen-III (O2 route): step 1/1. In terms of biological role, involved in the heme and chlorophyll biosynthesis. Catalyzes the aerobic oxidative decarboxylation of propionate groups of rings A and B of coproporphyrinogen-III to yield the vinyl groups in protoporphyrinogen-IX. The chain is Oxygen-dependent coproporphyrinogen-III oxidase from Prochlorococcus marinus (strain NATL1A).